Reading from the N-terminus, the 464-residue chain is Glutamate decarboxylase beta (464 aa).

Lysine 275 is subject to N6-(pyridoxal phosphate)lysine.

This sequence belongs to the group II decarboxylase family. The cofactor is pyridoxal 5'-phosphate.

The catalysed reaction is L-glutamate + H(+) = 4-aminobutanoate + CO2. Functionally, converts internalized glutamate to GABA and increases the internal pH. Involved in glutamate-dependent acid resistance in gastric fluid. In Listeria monocytogenes serovar 1/2a (strain ATCC BAA-679 / EGD-e), this protein is Glutamate decarboxylase beta (gadB).